Here is a 150-residue protein sequence, read N- to C-terminus: Arginine repressor (150 aa).

This sequence belongs to the ArgR family.

The protein localises to the cytoplasm. The protein operates within amino-acid biosynthesis; L-arginine biosynthesis [regulation]. In terms of biological role, regulates arginine biosynthesis genes. In Clostridium botulinum (strain Alaska E43 / Type E3), this protein is Arginine repressor.